Consider the following 290-residue polypeptide: 4-hydroxy-tetrahydrodipicolinate synthase (290 aa).

T44 provides a ligand contact to pyruvate. Y131 (proton donor/acceptor) is an active-site residue. Catalysis depends on K159, which acts as the Schiff-base intermediate with substrate. Position 201 (I201) interacts with pyruvate.

It belongs to the DapA family. In terms of assembly, homotetramer; dimer of dimers.

It is found in the cytoplasm. The catalysed reaction is L-aspartate 4-semialdehyde + pyruvate = (2S,4S)-4-hydroxy-2,3,4,5-tetrahydrodipicolinate + H2O + H(+). Its pathway is amino-acid biosynthesis; L-lysine biosynthesis via DAP pathway; (S)-tetrahydrodipicolinate from L-aspartate: step 3/4. Catalyzes the condensation of (S)-aspartate-beta-semialdehyde [(S)-ASA] and pyruvate to 4-hydroxy-tetrahydrodipicolinate (HTPA). The sequence is that of 4-hydroxy-tetrahydrodipicolinate synthase from Jannaschia sp. (strain CCS1).